Reading from the N-terminus, the 274-residue chain is Acetyl-coenzyme A carboxylase carboxyl transferase subunit alpha (274 aa).

One can recognise a CoA carboxyltransferase C-terminal domain in the interval 2 to 250; the sequence is NKEFIKSIVV…KKEIMNAMNE (249 aa).

This sequence belongs to the AccA family. In terms of assembly, acetyl-CoA carboxylase is a heterohexamer composed of biotin carboxyl carrier protein (AccB), biotin carboxylase (AccC) and two subunits each of ACCase subunit alpha (AccA) and ACCase subunit beta (AccD).

It is found in the cytoplasm. It catalyses the reaction N(6)-carboxybiotinyl-L-lysyl-[protein] + acetyl-CoA = N(6)-biotinyl-L-lysyl-[protein] + malonyl-CoA. It functions in the pathway lipid metabolism; malonyl-CoA biosynthesis; malonyl-CoA from acetyl-CoA: step 1/1. Its function is as follows. Component of the acetyl coenzyme A carboxylase (ACC) complex. First, biotin carboxylase catalyzes the carboxylation of biotin on its carrier protein (BCCP) and then the CO(2) group is transferred by the carboxyltransferase to acetyl-CoA to form malonyl-CoA. The protein is Acetyl-coenzyme A carboxylase carboxyl transferase subunit alpha of Clostridium botulinum (strain Alaska E43 / Type E3).